A 212-amino-acid chain; its full sequence is Methylthioribulose-1-phosphate dehydratase (212 aa).

Positions 97 and 99 each coordinate Zn(2+).

Belongs to the aldolase class II family. MtnB subfamily. Homotetramer. Zn(2+) serves as cofactor.

The catalysed reaction is 5-(methylsulfanyl)-D-ribulose 1-phosphate = 5-methylsulfanyl-2,3-dioxopentyl phosphate + H2O. It participates in amino-acid biosynthesis; L-methionine biosynthesis via salvage pathway; L-methionine from S-methyl-5-thio-alpha-D-ribose 1-phosphate: step 2/6. Its function is as follows. Catalyzes the dehydration of methylthioribulose-1-phosphate (MTRu-1-P) into 2,3-diketo-5-methylthiopentyl-1-phosphate (DK-MTP-1-P). This Bacillus cereus (strain AH187) protein is Methylthioribulose-1-phosphate dehydratase.